The sequence spans 168 residues: Translationally-controlled tumor protein homolog (168 aa).

One can recognise a TCTP domain in the interval methionine 1–phenylalanine 168. The residue at position 78 (serine 78) is a Phosphoserine.

The protein belongs to the TCTP family.

It localises to the cytoplasm. Functionally, involved in calcium binding and microtubule stabilization. May be a guanine nucleotide-free chaperone (GFC). The chain is Translationally-controlled tumor protein homolog (p23fy) from Schizosaccharomyces pombe (strain 972 / ATCC 24843) (Fission yeast).